We begin with the raw amino-acid sequence, 326 residues long: Vitamin B12 import system permease protein BtuC (326 aa).

9 helical membrane passes run 15–35 (WLLCLSVLMLLALLLSLCAGE), 61–81 (LAVLLVGAALAISGAVMQALF), 88–108 (PGLLGVSNGAGVGLIAAVLLG), 112–132 (LPNWALGLCAIAGALIITLIL), 146–166 (LLAGVALGIICSALMTWAIYF), 184–204 (GGVDWRQSWLMLALIPVLLWI), 240–260 (GWMVGVSVALAGAIGFIGLVI), 274–294 (VLLPGCALAGASALLLADVVA), and 302–322 (ELPIGVVTATLGAPVFIWLLL).

It belongs to the binding-protein-dependent transport system permease family. FecCD subfamily. The complex is composed of two ATP-binding proteins (BtuD), two transmembrane proteins (BtuC) and a solute-binding protein (BtuF).

It is found in the cell inner membrane. Its function is as follows. Part of the ABC transporter complex BtuCDF involved in vitamin B12 import. Involved in the translocation of the substrate across the membrane. The protein is Vitamin B12 import system permease protein BtuC of Escherichia coli O17:K52:H18 (strain UMN026 / ExPEC).